A 257-amino-acid polypeptide reads, in one-letter code: RNA polymerase sigma-G factor (257 aa).

The Polymerase core binding signature appears at 66-79; the sequence is DLFQVGCIGLIKSI. Positions 228-247 form a DNA-binding region, H-T-H motif; that stretch reads QMEVADEIGISQAQVSRLEK.

It belongs to the sigma-70 factor family.

Functionally, sigma factors are initiation factors that promote the attachment of RNA polymerase to specific initiation sites and are then released. This sigma factor is responsible for the expression of sporulation specific genes. The chain is RNA polymerase sigma-G factor (sigG) from Clostridium acetobutylicum (strain ATCC 824 / DSM 792 / JCM 1419 / IAM 19013 / LMG 5710 / NBRC 13948 / NRRL B-527 / VKM B-1787 / 2291 / W).